Consider the following 640-residue polypeptide: Chaperone protein DnaK (640 aa).

Thr198 is modified (phosphothreonine; by autocatalysis). The disordered stretch occupies residues Lys600–Lys640. Over residues Val628–Lys640 the composition is skewed to acidic residues.

It belongs to the heat shock protein 70 family.

Acts as a chaperone. The sequence is that of Chaperone protein DnaK from Geobacter sp. (strain M21).